Reading from the N-terminus, the 185-residue chain is Large ribosomal subunit protein uL6m (185 aa).

It belongs to the universal ribosomal protein uL6 family.

It is found in the mitochondrion. The protein is Large ribosomal subunit protein uL6m (RPL6) of Reclinomonas americana.